The sequence spans 567 residues: 2-isopropylmalate synthase (567 aa).

Residues 28–302 enclose the Pyruvate carboxyltransferase domain; that stretch reads PQWCSVDLRD…NPELDFSDIN (275 aa). The Mg(2+) site is built by Asp37, His241, His243, and Asn277. Residues 435-567 are regulatory domain; it reads IRTPLQLNYH…DMDTQEEDIA (133 aa).

The protein belongs to the alpha-IPM synthase/homocitrate synthase family. LeuA type 2 subfamily. Homodimer. Mg(2+) serves as cofactor.

It localises to the cytoplasm. It carries out the reaction 3-methyl-2-oxobutanoate + acetyl-CoA + H2O = (2S)-2-isopropylmalate + CoA + H(+). The protein operates within amino-acid biosynthesis; L-leucine biosynthesis; L-leucine from 3-methyl-2-oxobutanoate: step 1/4. Functionally, catalyzes the condensation of the acetyl group of acetyl-CoA with 3-methyl-2-oxobutanoate (2-ketoisovalerate) to form 3-carboxy-3-hydroxy-4-methylpentanoate (2-isopropylmalate). This is 2-isopropylmalate synthase from Acetoanaerobium sticklandii (strain ATCC 12662 / DSM 519 / JCM 1433 / CCUG 9281 / NCIMB 10654 / HF) (Clostridium sticklandii).